The primary structure comprises 200 residues: Large ribosomal subunit protein uL4 (200 aa).

The disordered stretch occupies residues G38–T72.

The protein belongs to the universal ribosomal protein uL4 family. In terms of assembly, part of the 50S ribosomal subunit.

Functionally, one of the primary rRNA binding proteins, this protein initially binds near the 5'-end of the 23S rRNA. It is important during the early stages of 50S assembly. It makes multiple contacts with different domains of the 23S rRNA in the assembled 50S subunit and ribosome. Its function is as follows. Forms part of the polypeptide exit tunnel. The chain is Large ribosomal subunit protein uL4 from Pseudomonas entomophila (strain L48).